A 327-amino-acid chain; its full sequence is BarH-like 1 homeobox protein (327 aa).

Disordered regions lie at residues 1-90, 113-181, and 303-327; these read MEGS…AQSR, PYSS…PRKA, and LQGA…AQPR. Residues 33–54 show a composition bias toward low complexity; it reads RSPLELSPRSESSSDCSSPASP. Residues 79 to 90 show a composition bias toward polar residues; that stretch reads QPGQLSAPAQSR. 2 stretches are compositionally biased toward basic and acidic residues: residues 133–143 and 152–166; these read AGEDFRDKLDK and SEYK…EISS. The segment at residues 178-237 is a DNA-binding region (homeobox); the sequence is PRKARTAFTDHQLAQLERSFERQKYLSVQDRMELAASLNLTDTQVKTWYQNRRTKWKRQT. Pro residues predominate over residues 308 to 318; sequence EPPPPLPPLPG.

Belongs to the BAR homeobox family.

Its subcellular location is the nucleus. This is BarH-like 1 homeobox protein (Barhl1) from Mus musculus (Mouse).